The sequence spans 496 residues: Cytochrome P450 71B14 (496 aa).

The chain crosses the membrane as a helical span at residues 1-21 (MIWWFIVGASFFFAFILIAKD). Cys-436 is a binding site for heme.

Belongs to the cytochrome P450 family. The cofactor is heme.

The protein resides in the membrane. The sequence is that of Cytochrome P450 71B14 (CYP71B14) from Arabidopsis thaliana (Mouse-ear cress).